Here is a 279-residue protein sequence, read N- to C-terminus: Phosphatidylglycerol--prolipoprotein diacylglyceryl transferase (279 aa).

A run of 3 helical transmembrane segments spans residues 18–38, 55–75, and 89–109; these read LSVR…YFVA, IIFY…VIFQ, and IWHG…AGVI. An a 1,2-diacyl-sn-glycero-3-phospho-(1'-sn-glycerol)-binding site is contributed by arginine 137. The next 2 helical transmembrane spans lie at 203 to 223 and 235 to 255; these read LGET…FIEG and IRVA…LIVY.

It belongs to the Lgt family.

It localises to the cell membrane. The catalysed reaction is L-cysteinyl-[prolipoprotein] + a 1,2-diacyl-sn-glycero-3-phospho-(1'-sn-glycerol) = an S-1,2-diacyl-sn-glyceryl-L-cysteinyl-[prolipoprotein] + sn-glycerol 1-phosphate + H(+). The protein operates within protein modification; lipoprotein biosynthesis (diacylglyceryl transfer). Functionally, catalyzes the transfer of the diacylglyceryl group from phosphatidylglycerol to the sulfhydryl group of the N-terminal cysteine of a prolipoprotein, the first step in the formation of mature lipoproteins. The protein is Phosphatidylglycerol--prolipoprotein diacylglyceryl transferase of Staphylococcus aureus (strain USA300).